A 266-amino-acid chain; its full sequence is Hemin import ATP-binding protein HmuV (266 aa).

One can recognise an ABC transporter domain in the interval 12–248 (LEANQLSYHV…ETLTRWYQAD (237 aa)). An ATP-binding site is contributed by 44–51 (GPNGAGKS).

The protein belongs to the ABC transporter superfamily. Heme (hemin) importer (TC 3.A.1.14.5) family. As to quaternary structure, the complex is composed of two ATP-binding proteins (HmuV), two transmembrane proteins (HmuU) and a solute-binding protein (HmuT).

It localises to the cell inner membrane. Part of the ABC transporter complex HmuTUV involved in hemin import. Responsible for energy coupling to the transport system. The sequence is that of Hemin import ATP-binding protein HmuV from Yersinia enterocolitica.